The chain runs to 788 residues: Probable phosphoketolase 1 (788 aa).

This sequence belongs to the XFP family. It depends on thiamine diphosphate as a cofactor.

The protein is Probable phosphoketolase 1 of Lactiplantibacillus plantarum (strain ATCC BAA-793 / NCIMB 8826 / WCFS1) (Lactobacillus plantarum).